Here is a 331-residue protein sequence, read N- to C-terminus: Ribosomal RNA small subunit methyltransferase H (331 aa).

S-adenosyl-L-methionine contacts are provided by residues 56–58, Asp76, Phe100, Asp122, and Gln129; that span reads GGH.

This sequence belongs to the methyltransferase superfamily. RsmH family.

The protein localises to the cytoplasm. The enzyme catalyses cytidine(1402) in 16S rRNA + S-adenosyl-L-methionine = N(4)-methylcytidine(1402) in 16S rRNA + S-adenosyl-L-homocysteine + H(+). Functionally, specifically methylates the N4 position of cytidine in position 1402 (C1402) of 16S rRNA. In Chromohalobacter salexigens (strain ATCC BAA-138 / DSM 3043 / CIP 106854 / NCIMB 13768 / 1H11), this protein is Ribosomal RNA small subunit methyltransferase H.